The following is a 232-amino-acid chain: 7-cyano-7-deazaguanine synthase (232 aa).

Residue 8 to 18 coordinates ATP; sequence FSGGQDSTTCL. Cys-187, Cys-196, Cys-199, and Cys-202 together coordinate Zn(2+).

Belongs to the QueC family. It depends on Zn(2+) as a cofactor.

The catalysed reaction is 7-carboxy-7-deazaguanine + NH4(+) + ATP = 7-cyano-7-deazaguanine + ADP + phosphate + H2O + H(+). It functions in the pathway purine metabolism; 7-cyano-7-deazaguanine biosynthesis. Catalyzes the ATP-dependent conversion of 7-carboxy-7-deazaguanine (CDG) to 7-cyano-7-deazaguanine (preQ(0)). The sequence is that of 7-cyano-7-deazaguanine synthase from Vibrio campbellii (strain ATCC BAA-1116).